Consider the following 388-residue polypeptide: Flavin-dependent monooxygenase (388 aa).

An NADPH-binding site is contributed by Arg54. Residues Asp61, Arg117, and Asp311 each coordinate FAD.

Belongs to the aromatic-ring hydroxylase family. TetX subfamily. As to quaternary structure, monomer. FAD is required as a cofactor.

The protein resides in the cytoplasm. The catalysed reaction is a tetracycline + NADPH + O2 + H(+) = an 11a-hydroxytetracycline + NADP(+) + H2O. It carries out the reaction tetracycline + NADPH + O2 + H(+) = 11a-hydroxytetracycline + NADP(+) + H2O. It catalyses the reaction oxytetracycline + NADPH + O2 + H(+) = 11a-hydroxy-oxytetracycline + NADP(+) + H2O. Functionally, an FAD-requiring monooxygenase active on some tetracycline antibiotic derivatives, which leads to their inactivation. Hydroxylates carbon 11a of tetracycline and some analogs. In terms of biological role, confers resistance to tetracycline via an oxidoreductase activity; NADPH is more active than NAD. Expression in E.coli leads to breakdown of tetracycline. Confers resistance to doxycycline, chlortetracycline, oxytetracycline and minocycline. The sequence is that of Flavin-dependent monooxygenase from Bacteroides fragilis.